We begin with the raw amino-acid sequence, 239 residues long: MAYQSLRLEYLQIPPVSRAYTTACVLTTAAVQLELITPFQLYFNPELIFKHFQIWRLITNFLFFGPVGFNFLFNMIFLYRYCRMLEEGSFRGRTADFVFMFLFGGFLMTLFGLFVSLVFLGQAFTIMLVYVWSRRNPYVRMNFFGLLNFQAPFLPWVLMGFSLLLGNSIIVDLLGIAVGHIYFFLEDIFPNQPGGIRILKTPSILRTIFDTPDEDPNYNPLPEERPGGFAWGEGQRLGG.

At 1 to 57 the chain is on the cytoplasmic side; it reads MAYQSLRLEYLQIPPVSRAYTTACVLTTAAVQLELITPFQLYFNPELIFKHFQIWRL. Residues 58–78 traverse the membrane as a helical segment; the sequence is ITNFLFFGPVGFNFLFNMIFL. Topologically, residues 79-96 are lumenal; that stretch reads YRYCRMLEEGSFRGRTAD. Residues 97–117 form a helical membrane-spanning segment; it reads FVFMFLFGGFLMTLFGLFVSL. Residues 118 to 150 are Cytoplasmic-facing; sequence VFLGQAFTIMLVYVWSRRNPYVRMNFFGLLNFQ. A helical transmembrane segment spans residues 151–171; it reads APFLPWVLMGFSLLLGNSIIV. Position 172 (aspartate 172) is a topological domain, lumenal. Residues 173–193 traverse the membrane as a helical segment; the sequence is LLGIAVGHIYFFLEDIFPNQP. Residues 194-239 are Cytoplasmic-facing; it reads GGIRILKTPSILRTIFDTPDEDPNYNPLPEERPGGFAWGEGQRLGG. Residues 214–239 form a disordered region; that stretch reads EDPNYNPLPEERPGGFAWGEGQRLGG. The span at 229 to 239 shows a compositional bias: gly residues; sequence FAWGEGQRLGG.

The protein belongs to the derlin family. In terms of assembly, forms homo- and heterooligomers with DERL3 and, to a lesser extent, with DERL1. Interacts with the SEL1L/SYVN1 and VCP/SELENOS protein complexes. Mediates association between VCP and EDEM1, as well as that between VCP and the misfolded glycoproteins. Interacts with OS9. Interacts with SELENOK and SELENOS. Interacts with the signal recognition particle/SRP and the SRP receptor; in the process of endoplasmic reticulum stress-induced pre-emptive quality control. Interacts with CCDC47. In terms of tissue distribution, widely expressed, with lowest levels in brain and heart.

The protein resides in the endoplasmic reticulum membrane. Its function is as follows. Functional component of endoplasmic reticulum-associated degradation (ERAD) for misfolded lumenal glycoproteins, but not that of misfolded nonglycoproteins. May act by forming a channel that allows the retrotranslocation of misfolded glycoproteins into the cytosol where they are ubiquitinated and degraded by the proteasome. May mediate the interaction between VCP and misfolded glycoproteins. May also be involved in endoplasmic reticulum stress-induced pre-emptive quality control, a mechanism that selectively attenuates the translocation of newly synthesized proteins into the endoplasmic reticulum and reroutes them to the cytosol for proteasomal degradation. The sequence is that of Derlin-2 from Mus musculus (Mouse).